A 202-amino-acid chain; its full sequence is Holliday junction resolvase RecU (202 aa).

Positions 85, 87, 100, and 119 each coordinate Mg(2+).

Belongs to the RecU family. The cofactor is Mg(2+).

The protein localises to the cytoplasm. It carries out the reaction Endonucleolytic cleavage at a junction such as a reciprocal single-stranded crossover between two homologous DNA duplexes (Holliday junction).. Its function is as follows. Endonuclease that resolves Holliday junction intermediates in genetic recombination. Cleaves mobile four-strand junctions by introducing symmetrical nicks in paired strands. Promotes annealing of linear ssDNA with homologous dsDNA. Required for DNA repair, homologous recombination and chromosome segregation. This is Holliday junction resolvase RecU from Streptococcus pyogenes serotype M5 (strain Manfredo).